Reading from the N-terminus, the 189-residue chain is dCTP deaminase, dUMP-forming (189 aa).

Residues 101–106 (KSSLGR), Asp-119, 127–129 (TLE), Gln-148, Tyr-162, and Gln-174 contribute to the dCTP site. Residue Glu-129 is the Proton donor/acceptor of the active site. The disordered stretch occupies residues 166 to 189 (AVGSKYQGQRGPTPSRSHLNFIKS). Residues 171–189 (YQGQRGPTPSRSHLNFIKS) are compositionally biased toward polar residues.

Belongs to the dCTP deaminase family. As to quaternary structure, homotrimer.

The catalysed reaction is dCTP + 2 H2O = dUMP + NH4(+) + diphosphate. Its pathway is pyrimidine metabolism; dUMP biosynthesis; dUMP from dCTP: step 1/1. In terms of biological role, bifunctional enzyme that catalyzes both the deamination of dCTP to dUTP and the hydrolysis of dUTP to dUMP without releasing the toxic dUTP intermediate. In Mycolicibacterium smegmatis (strain ATCC 700084 / mc(2)155) (Mycobacterium smegmatis), this protein is dCTP deaminase, dUMP-forming.